The sequence spans 481 residues: Pentatricopeptide repeat-containing protein At2g48000 (481 aa).

PPR repeat units lie at residues 147-181, 187-221, 222-256, 257-287, 292-324, 328-362, 364-398, 399-433, and 434-469; these read TTSV…QDGP, SVST…NILP, DSST…LVKP, TLAT…VKRH, EIKL…LIPK, KPWL…GLQI, TDGI…GWKM, SRSM…KISR, and SKKT…GHDF.

This sequence belongs to the PPR family. P subfamily.

The sequence is that of Pentatricopeptide repeat-containing protein At2g48000 from Arabidopsis thaliana (Mouse-ear cress).